A 359-amino-acid chain; its full sequence is UDP-N-acetylglucosamine--N-acetylmuramyl-(pentapeptide) pyrophosphoryl-undecaprenol N-acetylglucosamine transferase (359 aa).

UDP-N-acetyl-alpha-D-glucosamine contacts are provided by residues 15 to 17 (TGG), N127, R166, S191, I245, 264 to 269 (ALTVSE), and Q290.

It belongs to the glycosyltransferase 28 family. MurG subfamily.

Its subcellular location is the cell inner membrane. The catalysed reaction is di-trans,octa-cis-undecaprenyl diphospho-N-acetyl-alpha-D-muramoyl-L-alanyl-D-glutamyl-meso-2,6-diaminopimeloyl-D-alanyl-D-alanine + UDP-N-acetyl-alpha-D-glucosamine = di-trans,octa-cis-undecaprenyl diphospho-[N-acetyl-alpha-D-glucosaminyl-(1-&gt;4)]-N-acetyl-alpha-D-muramoyl-L-alanyl-D-glutamyl-meso-2,6-diaminopimeloyl-D-alanyl-D-alanine + UDP + H(+). It participates in cell wall biogenesis; peptidoglycan biosynthesis. Cell wall formation. Catalyzes the transfer of a GlcNAc subunit on undecaprenyl-pyrophosphoryl-MurNAc-pentapeptide (lipid intermediate I) to form undecaprenyl-pyrophosphoryl-MurNAc-(pentapeptide)GlcNAc (lipid intermediate II). The sequence is that of UDP-N-acetylglucosamine--N-acetylmuramyl-(pentapeptide) pyrophosphoryl-undecaprenol N-acetylglucosamine transferase from Pseudomonas putida (strain ATCC 700007 / DSM 6899 / JCM 31910 / BCRC 17059 / LMG 24140 / F1).